The chain runs to 745 residues: Copper-transporting ATPase (745 aa).

The 67-residue stretch at 1–67 folds into the HMA domain; that stretch reads MKESFYIEGM…LIEKLGYSPK (67 aa). The Cytoplasmic portion of the chain corresponds to 1–83; it reads MKESFYIEGM…KKEFFSPNVK (83 aa). C12 and C15 together coordinate Cu cation. A helical transmembrane segment spans residues 84 to 104; the sequence is LALAVIFTLFVVYLSMGAMLS. Over 105–124 the chain is Extracellular; it reads PSLLPKSLLAIDNHSNFLNA. The helical transmembrane segment at 125–144 threads the bilayer; the sequence is CLQLIGTLIVMHWGRDFYIQ. Topologically, residues 145 to 151 are cytoplasmic; the sequence is GFKALWH. Residues 152–172 traverse the membrane as a helical segment; sequence RQPNMSSLIAIGTSAALISSL. Over 173-194 the chain is Extracellular; it reads WQLYLVYTDHYTDQWSYGHYYF. The chain crosses the membrane as a helical span at residues 195–215; that stretch reads ESVCVILMFVMVGKRIENVSK. Residues 216–343 are Cytoplasmic-facing; the sequence is DKALDAMQAL…KAEISRLADK (128 aa). A helical membrane pass occupies residues 344-366; it reads VSSVFVPSVIAIAILAFVVWLII. The Extracellular portion of the chain corresponds to 367 to 379; the sequence is APKPDFWWNFGIA. The chain crosses the membrane as a helical span at residues 380–397; sequence LEVFVSVLVISCPCALGL. The Cytoplasmic portion of the chain corresponds to 398-685; that stretch reads ATLMSILVAN…KLSQATIKNI (288 aa). The active-site 4-aspartylphosphate intermediate is D435. The Mg(2+) site is built by D631 and D635. The helical transmembrane segment at 686–705 threads the bilayer; that stretch reads KENLFWAFCYNSVFIPLACG. Residues 706–716 lie on the Extracellular side of the membrane; the sequence is VLYKANIMLSP. The chain crosses the membrane as a helical span at residues 717–735; that stretch reads AIAGLAMSLSSVSVVLNSQ. Residues 736 to 745 are Cytoplasmic-facing; the sequence is RLRNFKIKDH.

This sequence belongs to the cation transport ATPase (P-type) (TC 3.A.3) family. Type IB subfamily.

The protein resides in the cell membrane. The catalysed reaction is Cu(2+)(in) + ATP + H2O = Cu(2+)(out) + ADP + phosphate + H(+). Functionally, probably involved in copper export. The sequence is that of Copper-transporting ATPase (copA) from Helicobacter pylori (Campylobacter pylori).